The primary structure comprises 394 residues: ATP phosphoribosyltransferase regulatory subunit (394 aa).

This sequence belongs to the class-II aminoacyl-tRNA synthetase family. HisZ subfamily. Heteromultimer composed of HisG and HisZ subunits.

It is found in the cytoplasm. Its pathway is amino-acid biosynthesis; L-histidine biosynthesis; L-histidine from 5-phospho-alpha-D-ribose 1-diphosphate: step 1/9. Required for the first step of histidine biosynthesis. May allow the feedback regulation of ATP phosphoribosyltransferase activity by histidine. The protein is ATP phosphoribosyltransferase regulatory subunit of Geobacillus thermodenitrificans (strain NG80-2).